Here is a 20-residue protein sequence, read N- to C-terminus: Short cationic peptide-3a (20 aa).

The residue at position 20 (E20) is a Glutamic acid 1-amide.

In terms of tissue distribution, expressed by the venom gland.

It is found in the secreted. In Cupiennius salei (American wandering spider), this protein is Short cationic peptide-3a.